We begin with the raw amino-acid sequence, 429 residues long: Glutamate-1-semialdehyde 2,1-aminomutase 2 (429 aa).

At Lys-268 the chain carries N6-(pyridoxal phosphate)lysine.

This sequence belongs to the class-III pyridoxal-phosphate-dependent aminotransferase family. HemL subfamily. In terms of assembly, homodimer. It depends on pyridoxal 5'-phosphate as a cofactor.

The protein resides in the cytoplasm. It catalyses the reaction (S)-4-amino-5-oxopentanoate = 5-aminolevulinate. It participates in porphyrin-containing compound metabolism; protoporphyrin-IX biosynthesis; 5-aminolevulinate from L-glutamyl-tRNA(Glu): step 2/2. This Staphylococcus aureus (strain USA300) protein is Glutamate-1-semialdehyde 2,1-aminomutase 2.